The following is a 449-amino-acid chain: UDP-N-acetylmuramoylalanine--D-glutamate ligase (449 aa).

ATP is bound at residue 113 to 119; the sequence is GTNGKTT.

This sequence belongs to the MurCDEF family.

Its subcellular location is the cytoplasm. It catalyses the reaction UDP-N-acetyl-alpha-D-muramoyl-L-alanine + D-glutamate + ATP = UDP-N-acetyl-alpha-D-muramoyl-L-alanyl-D-glutamate + ADP + phosphate + H(+). It participates in cell wall biogenesis; peptidoglycan biosynthesis. Cell wall formation. Catalyzes the addition of glutamate to the nucleotide precursor UDP-N-acetylmuramoyl-L-alanine (UMA). In Gloeothece citriformis (strain PCC 7424) (Cyanothece sp. (strain PCC 7424)), this protein is UDP-N-acetylmuramoylalanine--D-glutamate ligase.